A 325-amino-acid polypeptide reads, in one-letter code: NADH-quinone oxidoreductase subunit H (325 aa).

Transmembrane regions (helical) follow at residues 11-31, 81-101, 114-134, 154-174, 186-206, 237-257, 265-285, and 304-324; these read ILLSILKAVVILLVVVTCGAF, VIFTLAPMIAFTSLLLAFAIV, IGILFFLMMAGLAVYAVLFAG, LSYEVFLGLSLMGVVAQAGSF, IWNVIPQFFGFVTFAIAGVAV, FFVGEYIGIVTISALMVTLFF, LPPFIWFALKTAFFMMMFILI, and VCLPLTLVNLLVTAAVILWQA.

Belongs to the complex I subunit 1 family. As to quaternary structure, NDH-1 is composed of 13 different subunits. Subunits NuoA, H, J, K, L, M, N constitute the membrane sector of the complex.

The protein localises to the cell inner membrane. The enzyme catalyses a quinone + NADH + 5 H(+)(in) = a quinol + NAD(+) + 4 H(+)(out). Functionally, NDH-1 shuttles electrons from NADH, via FMN and iron-sulfur (Fe-S) centers, to quinones in the respiratory chain. The immediate electron acceptor for the enzyme in this species is believed to be ubiquinone. Couples the redox reaction to proton translocation (for every two electrons transferred, four hydrogen ions are translocated across the cytoplasmic membrane), and thus conserves the redox energy in a proton gradient. This subunit may bind ubiquinone. This chain is NADH-quinone oxidoreductase subunit H, found in Enterobacter sp. (strain 638).